A 194-amino-acid polypeptide reads, in one-letter code: RFKKIRRLGALPGLTNKRPRSGSDLKNQLRSGKRSQYRIRLEEKQKLRFHYGLTERQLLKYVHIAGKAKGSTGQVLLQLLEMRLDNILFRLGMASTIPGARQLVNHRHILVNGRIVDIPSYRCKPRDIITTKDKQRSKALIQNSIASSPHEELPNHLTIDLFQYKGLVNQIIDSKWIGLKINELLVVEYYSRQT.

Positions 82–143 (MRLDNILFRL…KQRSKALIQN (62 aa)) constitute an S4 RNA-binding domain.

The protein belongs to the universal ribosomal protein uS4 family. As to quaternary structure, part of the 30S ribosomal subunit. Contacts protein S5. The interaction surface between S4 and S5 is involved in control of translational fidelity.

The protein resides in the plastid. The protein localises to the chloroplast. In terms of biological role, one of the primary rRNA binding proteins, it binds directly to 16S rRNA where it nucleates assembly of the body of the 30S subunit. Its function is as follows. With S5 and S12 plays an important role in translational accuracy. The protein is Small ribosomal subunit protein uS4c (rps4) of Sisyrinchium striatum (Satin flower).